The following is a 129-amino-acid chain: Small ribosomal subunit protein uS11 (129 aa).

Belongs to the universal ribosomal protein uS11 family. Part of the 30S ribosomal subunit. Interacts with proteins S7 and S18. Binds to IF-3.

Functionally, located on the platform of the 30S subunit, it bridges several disparate RNA helices of the 16S rRNA. Forms part of the Shine-Dalgarno cleft in the 70S ribosome. The sequence is that of Small ribosomal subunit protein uS11 from Sphingopyxis alaskensis (strain DSM 13593 / LMG 18877 / RB2256) (Sphingomonas alaskensis).